Consider the following 883-residue polypeptide: DNA mismatch repair protein MutS (883 aa).

633-640 (GPNMGGKS) lines the ATP pocket.

Belongs to the DNA mismatch repair MutS family.

In terms of biological role, this protein is involved in the repair of mismatches in DNA. It is possible that it carries out the mismatch recognition step. This protein has a weak ATPase activity. The protein is DNA mismatch repair protein MutS of Bordetella parapertussis (strain 12822 / ATCC BAA-587 / NCTC 13253).